We begin with the raw amino-acid sequence, 449 residues long: Pentalenene oxygenase (449 aa).

A helical membrane pass occupies residues 251–273; that stretch reads VITVMAAGTETVAGTLTWIFHLL. Cys393 lines the heme pocket.

Belongs to the cytochrome P450 family.

It localises to the membrane. It catalyses the reaction pentalenene + 4 reduced [2Fe-2S]-[ferredoxin] + 2 O2 + 4 H(+) = pentalen-13-al + 4 oxidized [2Fe-2S]-[ferredoxin] + 3 H2O. It functions in the pathway antibiotic biosynthesis; neopentalenolactone biosynthesis. Functionally, catalyzes the conversion of pentalenene to pentalen-13-al by stepwise oxidation via pentalen-13-ol, a precursor of neopentalenolactone antibiotic. The protein is Pentalenene oxygenase (ptlI) of Streptomyces avermitilis (strain ATCC 31267 / DSM 46492 / JCM 5070 / NBRC 14893 / NCIMB 12804 / NRRL 8165 / MA-4680).